The following is a 401-amino-acid chain: Enoyl-[acyl-carrier-protein] reductase [NADH] (401 aa).

Residues 48 to 53, 74 to 75, 111 to 112, and 140 to 141 contribute to the NAD(+) site; these read GASSGY, FE, DA, and LA. Tyrosine 226 contacts substrate. The Proton donor role is filled by tyrosine 236. Residues lysine 245 and 274 to 276 contribute to the NAD(+) site; that span reads VVT.

This sequence belongs to the TER reductase family. Monomer.

It catalyses the reaction a 2,3-saturated acyl-[ACP] + NAD(+) = a (2E)-enoyl-[ACP] + NADH + H(+). It functions in the pathway lipid metabolism; fatty acid biosynthesis. Involved in the final reduction of the elongation cycle of fatty acid synthesis (FAS II). Catalyzes the reduction of a carbon-carbon double bond in an enoyl moiety that is covalently linked to an acyl carrier protein (ACP). The protein is Enoyl-[acyl-carrier-protein] reductase [NADH] of Xylella fastidiosa (strain Temecula1 / ATCC 700964).